The following is a 206-amino-acid chain: Emopamil-binding protein-like (206 aa).

Helical transmembrane passes span 10–30 (EAGG…ALGL), 42–62 (GALI…GPFV), 101–121 (VEIL…YAIV), and 165–185 (CWLY…LLLW). The 146-residue stretch at 39 to 184 (ADRGALIWLC…VWVLIPGLLL (146 aa)) folds into the EXPERA domain.

It belongs to the EBP family. As to quaternary structure, homodimer. As to expression, widely expressed with highest levels in liver, lung and kidney.

Its subcellular location is the endoplasmic reticulum membrane. Functionally, does not possess sterol isomerase activity and does not bind sigma ligands. The sequence is that of Emopamil-binding protein-like (EBPL) from Homo sapiens (Human).